Here is a 517-residue protein sequence, read N- to C-terminus: Crotonobetaine/carnitine--CoA ligase (517 aa).

Belongs to the ATP-dependent AMP-binding enzyme family.

The enzyme catalyses 4-(trimethylamino)butanoate + ATP + CoA = 4-(trimethylamino)butanoyl-CoA + AMP + diphosphate. It catalyses the reaction crotonobetaine + ATP + CoA = crotonobetainyl-CoA + AMP + diphosphate. It carries out the reaction (R)-carnitine + ATP + CoA = (R)-carnitinyl-CoA + AMP + diphosphate. It functions in the pathway amine and polyamine metabolism; carnitine metabolism. Catalyzes the transfer of CoA to carnitine, generating the initial carnitinyl-CoA needed for the CaiB reaction cycle. Also has activity toward crotonobetaine and gamma-butyrobetaine. This is Crotonobetaine/carnitine--CoA ligase from Escherichia coli (strain SE11).